The primary structure comprises 2035 residues: Ral GTPase-activating protein subunit alpha-1 (2035 aa).

2 disordered regions span residues 343–384 and 477–496; these read LVSR…SSLC and DGEK…VRNS. Residues 345–365 show a composition bias toward basic and acidic residues; the sequence is SREESKNDTVDKVDKSAEPEQ. Polar residues-rich tracts occupy residues 366-384 and 486-496; these read SHSN…SSLC and GTSTSEHVRNS. A phosphoserine mark is found at Ser710 and Ser720. The tract at residues 714-752 is disordered; sequence SFSRGWSRDQPGQAPMRQRSATTTGSPGTEKARSIVRQK. Thr753 carries the post-translational modification Phosphothreonine. At Ser772 the chain carries Phosphoserine. Phosphothreonine is present on Thr777. A Phosphoserine modification is found at Ser796. Positions 807 to 817 are enriched in basic and acidic residues; that stretch reads ERAKVNKEDTS. Disordered stretches follow at residues 807-834 and 848-911; these read ERAK…SANV and SGNA…SHSD. 2 stretches are compositionally biased toward polar residues: residues 824 to 833 and 849 to 862; these read NSETGGNSAN and GNAS…SSPG. A phosphoserine mark is found at Ser859, Ser860, and Ser863. The segment covering 894–911 has biased composition (low complexity); it reads SPASAGSSDLMSSDSHSD. A phosphoserine mark is found at Ser985, Ser989, Ser993, and Ser999. Residues 986–1008 show a composition bias toward polar residues; sequence ESASPVHSALGSRSQTPSPSTLS. The segment at 986–1011 is disordered; sequence ESASPVHSALGSRSQTPSPSTLSRAH. Thr1001 is subject to Phosphothreonine. Phosphoserine is present on residues Ser1003 and Ser1477. The interval 1326-2035 is minimal domain that binds to TCF3/E12; the sequence is FTNKTVAHVA…YHHFPADADH (710 aa). Residues 1713-1748 adopt a coiled-coil conformation; the sequence is SEKQENDVINAILKQYTEEKEFVEKHFNDLNMKASE. The Rap-GAP domain maps to 1795–2003; the sequence is LRNLDSRQCR…EERARYLQTI (209 aa).

As to quaternary structure, component of the heterodimeric RalGAP1 complex with RALGAPB. Heterodimerization is required for activity. Interacts with the HLH region of TCF3/isoform E12. Expressed during embryogenesis. Expressed in the adult brain, particularly in neurons of the cortex and hippocampus.

The protein resides in the cytoplasm. It localises to the nucleus. Catalytic subunit of the heterodimeric RalGAP1 complex which acts as a GTPase activator for the Ras-like small GTPases RALA and RALB. May interact with the HLH region of TCF3/isoform E12. This Mus musculus (Mouse) protein is Ral GTPase-activating protein subunit alpha-1 (Ralgapa1).